The chain runs to 1101 residues: Type VI secretion system component TssM1 (1101 aa).

Residues 371–391 (LTIGALSATALVVLAVTAVWI) traverse the membrane as a helical segment.

It is found in the cell inner membrane. In terms of biological role, core component of the type VI (T6SS) secretion system that plays a role in the release of toxins targeting both eukaryotic and prokaryotic species. Plays an essential role in stabilization of assembled TssK1 structure at a fixed perimembrane site. In Pseudomonas aeruginosa (strain ATCC 15692 / DSM 22644 / CIP 104116 / JCM 14847 / LMG 12228 / 1C / PRS 101 / PAO1), this protein is Type VI secretion system component TssM1.